Reading from the N-terminus, the 311-residue chain is Pyrimidine-specific ribonucleoside hydrolase RihA (311 aa).

Residue histidine 240 is part of the active site.

It belongs to the IUNH family. RihA subfamily.

In terms of biological role, hydrolyzes cytidine or uridine to ribose and cytosine or uracil, respectively. The sequence is that of Pyrimidine-specific ribonucleoside hydrolase RihA from Salmonella dublin (strain CT_02021853).